The sequence spans 338 residues: UDP-glucose 4-epimerase (338 aa).

Residues 16–17 (YI), 37–42 (IDINHT), 59–60 (NL), 81–85 (FAAKT), T126, Y153, K157, and F181 each bind NAD(+). Substrate is bound by residues T126 and Y153. Y153 serves as the catalytic Proton acceptor. Residues N182, 198–199 (TL), 215–217 (FLY), R230, and 294–297 (RAGD) each bind substrate.

The protein belongs to the NAD(P)-dependent epimerase/dehydratase family. Homodimer. NAD(+) is required as a cofactor.

The catalysed reaction is UDP-alpha-D-glucose = UDP-alpha-D-galactose. It participates in carbohydrate metabolism; galactose metabolism. In terms of biological role, involved in the metabolism of galactose. Catalyzes the conversion of UDP-galactose (UDP-Gal) to UDP-glucose (UDP-Glc) through a mechanism involving the transient reduction of NAD. The polypeptide is UDP-glucose 4-epimerase (galE) (Mycoplasma pneumoniae (strain ATCC 29342 / M129 / Subtype 1) (Mycoplasmoides pneumoniae)).